The primary structure comprises 376 residues: Succinyl-diaminopimelate desuccinylase (376 aa).

His67 is a binding site for Zn(2+). Residue Asp69 is part of the active site. Asp100 serves as a coordination point for Zn(2+). Residue Glu134 is the Proton acceptor of the active site. Zn(2+) contacts are provided by Glu135, Glu163, and His349.

The protein belongs to the peptidase M20A family. DapE subfamily. Homodimer. Requires Zn(2+) as cofactor. Co(2+) is required as a cofactor.

The catalysed reaction is N-succinyl-(2S,6S)-2,6-diaminopimelate + H2O = (2S,6S)-2,6-diaminopimelate + succinate. Its pathway is amino-acid biosynthesis; L-lysine biosynthesis via DAP pathway; LL-2,6-diaminopimelate from (S)-tetrahydrodipicolinate (succinylase route): step 3/3. Its function is as follows. Catalyzes the hydrolysis of N-succinyl-L,L-diaminopimelic acid (SDAP), forming succinate and LL-2,6-diaminopimelate (DAP), an intermediate involved in the bacterial biosynthesis of lysine and meso-diaminopimelic acid, an essential component of bacterial cell walls. In Shewanella sediminis (strain HAW-EB3), this protein is Succinyl-diaminopimelate desuccinylase.